The primary structure comprises 227 residues: PKHD-type hydroxylase BPSS1206 (227 aa).

Residues 78–178 form the Fe2OG dioxygenase domain; sequence KVFPPLFNRY…RVASFFWIQS (101 aa). Residues His96, Asp98, and His159 each contribute to the Fe cation site. 2-oxoglutarate is bound at residue Arg169.

Requires Fe(2+) as cofactor. L-ascorbate is required as a cofactor.

The sequence is that of PKHD-type hydroxylase BPSS1206 from Burkholderia pseudomallei (strain K96243).